We begin with the raw amino-acid sequence, 87 residues long: Costars family protein (87 aa).

It belongs to the costars family.

The chain is Costars family protein from Oryza sativa subsp. indica (Rice).